Consider the following 292-residue polypeptide: 4-diphosphocytidyl-2-C-methyl-D-erythritol kinase (292 aa).

The active site involves K10. 100–110 is an ATP binding site; sequence PIGSGLGGGSS. D142 is an active-site residue.

It belongs to the GHMP kinase family. IspE subfamily. In terms of assembly, homodimer.

The catalysed reaction is 4-CDP-2-C-methyl-D-erythritol + ATP = 4-CDP-2-C-methyl-D-erythritol 2-phosphate + ADP + H(+). Its pathway is isoprenoid biosynthesis; isopentenyl diphosphate biosynthesis via DXP pathway; isopentenyl diphosphate from 1-deoxy-D-xylulose 5-phosphate: step 3/6. Functionally, catalyzes the phosphorylation of the position 2 hydroxy group of 4-diphosphocytidyl-2C-methyl-D-erythritol. In Buchnera aphidicola subsp. Schizaphis graminum (strain Sg), this protein is 4-diphosphocytidyl-2-C-methyl-D-erythritol kinase.